The chain runs to 214 residues: Holliday junction branch migration complex subunit RuvA (214 aa).

Positions 1–63 (MISSLRGTVL…EDSLTLFGFP (63 aa)) are domain I. The domain II stretch occupies residues 64 to 139 (GPDELRAFEL…KLFVTQPRAR (76 aa)). Positions 139–143 (RSATS) are flexible linker. The domain III stretch occupies residues 144–214 (AASTVTADVV…AAPTGQAADR (71 aa)).

This sequence belongs to the RuvA family. In terms of assembly, homotetramer. Forms an RuvA(8)-RuvB(12)-Holliday junction (HJ) complex. HJ DNA is sandwiched between 2 RuvA tetramers; dsDNA enters through RuvA and exits via RuvB. An RuvB hexamer assembles on each DNA strand where it exits the tetramer. Each RuvB hexamer is contacted by two RuvA subunits (via domain III) on 2 adjacent RuvB subunits; this complex drives branch migration. In the full resolvosome a probable DNA-RuvA(4)-RuvB(12)-RuvC(2) complex forms which resolves the HJ.

It is found in the cytoplasm. In terms of biological role, the RuvA-RuvB-RuvC complex processes Holliday junction (HJ) DNA during genetic recombination and DNA repair, while the RuvA-RuvB complex plays an important role in the rescue of blocked DNA replication forks via replication fork reversal (RFR). RuvA specifically binds to HJ cruciform DNA, conferring on it an open structure. The RuvB hexamer acts as an ATP-dependent pump, pulling dsDNA into and through the RuvAB complex. HJ branch migration allows RuvC to scan DNA until it finds its consensus sequence, where it cleaves and resolves the cruciform DNA. This is Holliday junction branch migration complex subunit RuvA from Clavibacter michiganensis subsp. michiganensis (strain NCPPB 382).